A 146-amino-acid chain; its full sequence is Large ribosomal subunit protein uL15 (146 aa).

Residues 1–13 (MKLHELKPAEGSR) are compositionally biased toward basic and acidic residues. Residues 1–60 (MKLHELKPAEGSRKQRNRVGRGIGSGNGKTAGKGHKGQNARSGGGVRPGFEGGQNPLFRR) are disordered. Composition is skewed to gly residues over residues 21–31 (RGIGSGNGKTA) and 42–52 (SGGGVRPGFEG).

This sequence belongs to the universal ribosomal protein uL15 family. As to quaternary structure, part of the 50S ribosomal subunit.

In terms of biological role, binds to the 23S rRNA. In Lysinibacillus sphaericus (strain C3-41), this protein is Large ribosomal subunit protein uL15.